The following is a 344-amino-acid chain: Putative esterase NocK (344 aa).

Positions 1 to 34 form a signal peptide, tat-type signal; sequence MIGVTRRSGLALAVLVSSAACAGAEPVAPPPAPA. Positions 265-295 are disordered; the sequence is GGADERRREEARPAAAPGGTSTSRETCANPD. Over residues 266-276 the composition is skewed to basic and acidic residues; the sequence is GADERRREEAR.

The protein belongs to the AB hydrolase superfamily. In terms of processing, predicted to be exported by the Tat system. The position of the signal peptide cleavage has not been experimentally proven.

The protein is Putative esterase NocK of Nocardia uniformis subsp. tsuyamanensis.